The primary structure comprises 422 residues: CRISPR-associated endodeoxyribonuclease Cas12f1 (422 aa).

The interval 1 to 126 (MIKVYRYEIV…PSYKRDIPLD (126 aa)) is recognition domain (REC). Positions 127 to 211 (LIKENISVNR…YLNISYDFEP (85 aa)) are wedge domain (WED). Positions 212 to 220 (QTRVLDLNK) are linker. The tract at residues 221 to 370 (IMGIDLGVAV…IKIDPQYTSQ (150 aa)) is ruvC-I. Catalysis depends on residues aspartate 225 and glutamate 324. The tract at residues 371-399 (RCSECGNIDSGNRIGQAIFKCRACGYEAN) is target nucleic acid-binding (TNB). 4 residues coordinate Zn(2+): cysteine 372, cysteine 375, cysteine 391, and cysteine 394. The ruvC-II stretch occupies residues 400-420 (ADYNAARNIAIPNIDKIIAES). The active site involves aspartate 401.

This sequence belongs to the CRISPR-associated endonuclease Cas12f family. An asymmetric homodimer. Guide RNA is probably required for dimerization. It depends on Mg(2+) as a cofactor. Requires Zn(2+) as cofactor.

Functionally, CRISPR (clustered regularly interspaced short palindromic repeat), is an adaptive immune system that provides protection against mobile genetic elements (viruses, transposable elements and conjugative plasmids). CRISPR clusters contain sequences complementary to antecedent mobile elements and target invading nucleic acids. CRISPR clusters are transcribed and processed into CRISPR RNA (crRNA), which requires a trans-encoded small RNA (tracrRNA), but not this protein. Recognizes a short motif in the CRISPR repeat sequences (the 5' PAM or protospacer adjacent motif, YTT in this organism) to help distinguish self versus nonself, as targets within the CRISPR locus do not have PAMs. Has dsDNA endonuclease activity upon expression in E.coli of this protein, a mini CRISPR array and the probable tracrRNA. Plasmid cleavage is centered around positions 19-24 base pairs 3' of PAM. The mini system protects E.coli against transformation by foreign plasmids. This is CRISPR-associated endodeoxyribonuclease Cas12f1 from Sulfoacidibacillus thermotolerans (Acidibacillus sulfuroxidans).